The sequence spans 282 residues: Pantothenate synthetase (282 aa).

Residue 29-36 (MGFLHEGH) coordinates ATP. Histidine 36 functions as the Proton donor in the catalytic mechanism. Glutamine 60 is a binding site for (R)-pantoate. A beta-alanine-binding site is contributed by glutamine 60. 146-149 (GEKD) serves as a coordination point for ATP. Glutamine 152 contacts (R)-pantoate. ATP-binding positions include isoleucine 175 and 183 to 186 (KSSR).

This sequence belongs to the pantothenate synthetase family. Homodimer.

It is found in the cytoplasm. It catalyses the reaction (R)-pantoate + beta-alanine + ATP = (R)-pantothenate + AMP + diphosphate + H(+). It functions in the pathway cofactor biosynthesis; (R)-pantothenate biosynthesis; (R)-pantothenate from (R)-pantoate and beta-alanine: step 1/1. Catalyzes the condensation of pantoate with beta-alanine in an ATP-dependent reaction via a pantoyl-adenylate intermediate. In Clostridioides difficile (strain 630) (Peptoclostridium difficile), this protein is Pantothenate synthetase.